Reading from the N-terminus, the 355-residue chain is Histidinol-phosphate aminotransferase (355 aa).

Lys-218 bears the N6-(pyridoxal phosphate)lysine mark.

It belongs to the class-II pyridoxal-phosphate-dependent aminotransferase family. Histidinol-phosphate aminotransferase subfamily. As to quaternary structure, homodimer. The cofactor is pyridoxal 5'-phosphate.

The enzyme catalyses L-histidinol phosphate + 2-oxoglutarate = 3-(imidazol-4-yl)-2-oxopropyl phosphate + L-glutamate. It functions in the pathway amino-acid biosynthesis; L-histidine biosynthesis; L-histidine from 5-phospho-alpha-D-ribose 1-diphosphate: step 7/9. The polypeptide is Histidinol-phosphate aminotransferase (Pelodictyon phaeoclathratiforme (strain DSM 5477 / BU-1)).